A 314-amino-acid polypeptide reads, in one-letter code: Methionyl-tRNA formyltransferase (314 aa).

A (6S)-5,6,7,8-tetrahydrofolate-binding site is contributed by serine 111–proline 114.

This sequence belongs to the Fmt family.

It catalyses the reaction L-methionyl-tRNA(fMet) + (6R)-10-formyltetrahydrofolate = N-formyl-L-methionyl-tRNA(fMet) + (6S)-5,6,7,8-tetrahydrofolate + H(+). Functionally, attaches a formyl group to the free amino group of methionyl-tRNA(fMet). The formyl group appears to play a dual role in the initiator identity of N-formylmethionyl-tRNA by promoting its recognition by IF2 and preventing the misappropriation of this tRNA by the elongation apparatus. The polypeptide is Methionyl-tRNA formyltransferase (Nitrobacter winogradskyi (strain ATCC 25391 / DSM 10237 / CIP 104748 / NCIMB 11846 / Nb-255)).